The sequence spans 162 residues: NADH-quinone oxidoreductase subunit I (162 aa).

4Fe-4S ferredoxin-type domains are found at residues 53-83 (LRRYPNGEERCIACKLCEAVCPALAITIESD) and 93-122 (TRYDIDLTKCIFCGFCEESCPVDSIVETHI). [4Fe-4S] cluster-binding residues include C63, C66, C69, C73, C102, C105, C108, and C112.

It belongs to the complex I 23 kDa subunit family. NDH-1 is composed of 14 different subunits. Subunits NuoA, H, J, K, L, M, N constitute the membrane sector of the complex. [4Fe-4S] cluster serves as cofactor.

Its subcellular location is the cell inner membrane. It catalyses the reaction a quinone + NADH + 5 H(+)(in) = a quinol + NAD(+) + 4 H(+)(out). In terms of biological role, NDH-1 shuttles electrons from NADH, via FMN and iron-sulfur (Fe-S) centers, to quinones in the respiratory chain. The immediate electron acceptor for the enzyme in this species is believed to be ubiquinone. Couples the redox reaction to proton translocation (for every two electrons transferred, four hydrogen ions are translocated across the cytoplasmic membrane), and thus conserves the redox energy in a proton gradient. The protein is NADH-quinone oxidoreductase subunit I of Bordetella avium (strain 197N).